The following is a 92-amino-acid chain: Precursor of CEP12 (92 aa).

Residues 1–30 (MVNRDNSIVALSFFMLFLLVLHLHFETTTA) form the signal peptide. Positions 31–70 (ARKPVRVFGPPSSIEWSPPSPPKDDFEWFEINIYKNIEQT) are excised as a propeptide. The interval 70-92 (TAFRPTGQGPSQGIGHKDPPGAP) is disordered. Pro-74 and Pro-79 each carry hydroxyproline. Positions 86-92 (KDPPGAP) are excised as a propeptide.

It belongs to the C-terminally encoded plant signaling peptide (CEP) family. As to quaternary structure, interacts with CEP receptors (e.g. CEPR1 and CEPR2). In terms of processing, the mature small signaling peptide is generated by proteolytic processing of the longer precursor.

It is found in the secreted. The protein resides in the extracellular space. Its subcellular location is the apoplast. Functionally, extracellular signaling peptide that may regulate primary root growth rate and systemic nitrogen (N)-demand signaling. The chain is Precursor of CEP12 from Arabidopsis thaliana (Mouse-ear cress).